A 103-amino-acid polypeptide reads, in one-letter code: Integration host factor subunit beta (103 aa).

Belongs to the bacterial histone-like protein family. As to quaternary structure, heterodimer of an alpha and a beta chain.

This protein is one of the two subunits of integration host factor, a specific DNA-binding protein that functions in genetic recombination as well as in transcriptional and translational control. This chain is Integration host factor subunit beta, found in Bradyrhizobium sp. (strain BTAi1 / ATCC BAA-1182).